A 128-amino-acid polypeptide reads, in one-letter code: 2-iminobutanoate/2-iminopropanoate deaminase (128 aa).

Arg-105 provides a ligand contact to substrate.

This sequence belongs to the RutC family. In terms of assembly, homotrimer.

It localises to the cytoplasm. It carries out the reaction 2-iminobutanoate + H2O = 2-oxobutanoate + NH4(+). The catalysed reaction is 2-iminopropanoate + H2O = pyruvate + NH4(+). Its pathway is amino-acid biosynthesis; L-isoleucine biosynthesis; 2-oxobutanoate from L-threonine. Functionally, accelerates the release of ammonia from reactive enamine/imine intermediates of the PLP-dependent threonine dehydratase (IlvA) in the low water environment of the cell. It catalyzes the deamination of enamine/imine intermediates to yield 2-ketobutyrate and ammonia. It is required for the detoxification of reactive intermediates of IlvA due to their highly nucleophilic abilities and to avoid they are captured by anthranilate phosphoribosyltransferase (TrpD) to generate PRA, an intermediate in the alternative pyrimidine biosynthetic (APB) pathway. Also required for full activity of IlvE which is involved in the isoleucine biosynthesis. RidA also accelerates the release of pyruvate produced by IlvA from L-serine. In Salmonella typhimurium (strain LT2 / SGSC1412 / ATCC 700720), this protein is 2-iminobutanoate/2-iminopropanoate deaminase.